The sequence spans 420 residues: Gamma-glutamyl phosphate reductase (420 aa).

The protein belongs to the gamma-glutamyl phosphate reductase family.

It localises to the cytoplasm. The enzyme catalyses L-glutamate 5-semialdehyde + phosphate + NADP(+) = L-glutamyl 5-phosphate + NADPH + H(+). The protein operates within amino-acid biosynthesis; L-proline biosynthesis; L-glutamate 5-semialdehyde from L-glutamate: step 2/2. In terms of biological role, catalyzes the NADPH-dependent reduction of L-glutamate 5-phosphate into L-glutamate 5-semialdehyde and phosphate. The product spontaneously undergoes cyclization to form 1-pyrroline-5-carboxylate. This chain is Gamma-glutamyl phosphate reductase, found in Pasteurella multocida (strain Pm70).